Reading from the N-terminus, the 93-residue chain is Pyrimidine/purine nucleoside phosphorylase (93 aa).

It belongs to the nucleoside phosphorylase PpnP family.

It catalyses the reaction a purine D-ribonucleoside + phosphate = a purine nucleobase + alpha-D-ribose 1-phosphate. It carries out the reaction adenosine + phosphate = alpha-D-ribose 1-phosphate + adenine. The enzyme catalyses cytidine + phosphate = cytosine + alpha-D-ribose 1-phosphate. The catalysed reaction is guanosine + phosphate = alpha-D-ribose 1-phosphate + guanine. It catalyses the reaction inosine + phosphate = alpha-D-ribose 1-phosphate + hypoxanthine. It carries out the reaction thymidine + phosphate = 2-deoxy-alpha-D-ribose 1-phosphate + thymine. The enzyme catalyses uridine + phosphate = alpha-D-ribose 1-phosphate + uracil. The catalysed reaction is xanthosine + phosphate = alpha-D-ribose 1-phosphate + xanthine. In terms of biological role, catalyzes the phosphorolysis of diverse nucleosides, yielding D-ribose 1-phosphate and the respective free bases. Can use uridine, adenosine, guanosine, cytidine, thymidine, inosine and xanthosine as substrates. Also catalyzes the reverse reactions. The sequence is that of Pyrimidine/purine nucleoside phosphorylase from Tolumonas auensis (strain DSM 9187 / NBRC 110442 / TA 4).